The following is a 474-amino-acid chain: MVMASAGVNMPGGDGDHPPAAAQECHRLRRRRYVPAAAAASEDGDNSSNGGGEKRSLPASSASPSPSPTSSAASSDCSSDRDDDGCSSTAGAAARRLPLPSGASTAAAVWPVAFGSVSLAGRMRDMEDAVSLRPSFCTWLDGSPMHFFAVFDGHGGPHVSALCREQMHVIVAEEMVAEAAALRQRQPAAMEEEEEERAVAGGAVAELRPGGRAGGGGVRVRARHRAGVPCPLSGQTGAIIGSTAVVALLVRDRLVVSNCGDSRAVLCRAGDPLPLSSDHKGLNPSLSWRGTRVALARGTWGDKTGQSVGPAALLLSGGAHPDRPDEKARIEAVGGRVVYLNGPRVRGILAMSRALGDKYLKPEVICEPDITITVRTVDDECLILASDGMWDVISNETASDVARQCLEDGSPTSGRRAARSGEAASSSAGAPAAAVGQESEPRCYRAAALLARLALGRESSDNISVVVIDLKGRG.

The tract at residues Met-1–Ala-90 is disordered. Residues Leu-57–Cys-77 show a composition bias toward low complexity. Positions Ala-113–Leu-470 constitute a PPM-type phosphatase domain. Positions 152, 153, and 387 each coordinate Mn(2+). The tract at residues Leu-406–Ala-434 is disordered. Over residues Ser-420–Ala-434 the composition is skewed to low complexity. Mn(2+) is bound at residue Asp-461.

Belongs to the PP2C family. The cofactor is Mg(2+). Requires Mn(2+) as cofactor.

It catalyses the reaction O-phospho-L-seryl-[protein] + H2O = L-seryl-[protein] + phosphate. It carries out the reaction O-phospho-L-threonyl-[protein] + H2O = L-threonyl-[protein] + phosphate. The sequence is that of Probable protein phosphatase 2C 37 from Oryza sativa subsp. japonica (Rice).